The sequence spans 385 residues: DNA replication and repair protein RecF (385 aa).

Gly30–Thr37 is an ATP binding site.

This sequence belongs to the RecF family.

Its subcellular location is the cytoplasm. Functionally, the RecF protein is involved in DNA metabolism; it is required for DNA replication and normal SOS inducibility. RecF binds preferentially to single-stranded, linear DNA. It also seems to bind ATP. In Mycobacterium marinum (strain ATCC BAA-535 / M), this protein is DNA replication and repair protein RecF.